The sequence spans 382 residues: Chaperone protein DnaJ 1 (382 aa).

The J domain occupies 4-68 (DYYGILGVDR…DKRRIVDMGG (65 aa)). The CR-type zinc finger occupies 134–216 (GAKKDLTLDT…CAGDGRVRAR (83 aa)). The Zn(2+) site is built by C147, C150, C164, C167, C190, C193, C204, and C207. CXXCXGXG motif repeat units lie at residues 147–154 (CTKCHGSG), 164–171 (CGTCNGAG), 190–197 (CHTCDGTG), and 204–211 (CTECAGDG).

Belongs to the DnaJ family. As to quaternary structure, homodimer. Zn(2+) serves as cofactor.

The protein resides in the cytoplasm. Its function is as follows. Participates actively in the response to hyperosmotic and heat shock by preventing the aggregation of stress-denatured proteins and by disaggregating proteins, also in an autonomous, DnaK-independent fashion. Unfolded proteins bind initially to DnaJ; upon interaction with the DnaJ-bound protein, DnaK hydrolyzes its bound ATP, resulting in the formation of a stable complex. GrpE releases ADP from DnaK; ATP binding to DnaK triggers the release of the substrate protein, thus completing the reaction cycle. Several rounds of ATP-dependent interactions between DnaJ, DnaK and GrpE are required for fully efficient folding. Also involved, together with DnaK and GrpE, in the DNA replication of plasmids through activation of initiation proteins. The chain is Chaperone protein DnaJ 1 from Corynebacterium glutamicum (strain ATCC 13032 / DSM 20300 / JCM 1318 / BCRC 11384 / CCUG 27702 / LMG 3730 / NBRC 12168 / NCIMB 10025 / NRRL B-2784 / 534).